The following is a 126-amino-acid chain: MYWSILAVGIGGALGSLFRWFLGIRLNGLFSGLPLGTFAANVIAGYVIGVAVAGFARAPQIAPEWRLFVITGLMGGLSTFSTFSAEVVQRLQDGRLGWAAGEIVIHVGASLVMTILGIATVSLLSR.

The next 4 helical transmembrane spans lie at 4-24, 35-55, 68-88, and 103-123; these read SILA…FLGI, LGTF…VAGF, FVIT…AEVV, and IVIH…TVSL. 2 residues coordinate Na(+): Gly-75 and Ser-78.

This sequence belongs to the fluoride channel Fluc/FEX (TC 1.A.43) family.

Its subcellular location is the cell inner membrane. The enzyme catalyses fluoride(in) = fluoride(out). Na(+) is not transported, but it plays an essential structural role and its presence is essential for fluoride channel function. Its function is as follows. Fluoride-specific ion channel. Important for reducing fluoride concentration in the cell, thus reducing its toxicity. This is Fluoride-specific ion channel FluC from Paraburkholderia xenovorans (strain LB400).